Consider the following 177-residue polypeptide: Alkyl hydroperoxide reductase AhpD (177 aa).

The Proton donor role is filled by C131. The cysteines at positions 131 and 134 are disulfide-linked. Catalysis depends on C134, which acts as the Cysteine sulfenic acid (-SOH) intermediate.

It belongs to the AhpD family.

The enzyme catalyses N(6)-[(R)-dihydrolipoyl]-L-lysyl-[lipoyl-carrier protein] + a hydroperoxide = N(6)-[(R)-lipoyl]-L-lysyl-[lipoyl-carrier protein] + an alcohol + H2O. Its function is as follows. Antioxidant protein with alkyl hydroperoxidase activity. Required for the reduction of the AhpC active site cysteine residues and for the regeneration of the AhpC enzyme activity. This chain is Alkyl hydroperoxide reductase AhpD, found in Solibacter usitatus (strain Ellin6076).